The primary structure comprises 222 residues: GTP cyclohydrolase 1 (222 aa).

Residues Cys111, His114, and Cys182 each contribute to the Zn(2+) site.

It belongs to the GTP cyclohydrolase I family. Homomer.

The enzyme catalyses GTP + H2O = 7,8-dihydroneopterin 3'-triphosphate + formate + H(+). Its pathway is cofactor biosynthesis; 7,8-dihydroneopterin triphosphate biosynthesis; 7,8-dihydroneopterin triphosphate from GTP: step 1/1. This Shigella boydii serotype 18 (strain CDC 3083-94 / BS512) protein is GTP cyclohydrolase 1.